Consider the following 230-residue polypeptide: Pyridoxine/pyridoxamine 5'-phosphate oxidase (230 aa).

Substrate-binding positions include 21–24 (RVEY) and lysine 87. Residues 82-87 (RSVLCK), 97-98 (YT), lysine 104, and glutamine 126 contribute to the FMN site. The substrate site is built by tyrosine 144, arginine 148, and serine 152. Residues 161–162 (QS) and tryptophan 207 contribute to the FMN site. Position 213–215 (213–215 (RVH)) interacts with substrate. Arginine 217 provides a ligand contact to FMN.

The protein belongs to the pyridoxamine 5'-phosphate oxidase family. Homodimer. FMN serves as cofactor.

It catalyses the reaction pyridoxamine 5'-phosphate + O2 + H2O = pyridoxal 5'-phosphate + H2O2 + NH4(+). The catalysed reaction is pyridoxine 5'-phosphate + O2 = pyridoxal 5'-phosphate + H2O2. The protein operates within cofactor metabolism; pyridoxal 5'-phosphate salvage; pyridoxal 5'-phosphate from pyridoxamine 5'-phosphate: step 1/1. Its pathway is cofactor metabolism; pyridoxal 5'-phosphate salvage; pyridoxal 5'-phosphate from pyridoxine 5'-phosphate: step 1/1. Functionally, catalyzes the oxidation of either pyridoxine 5'-phosphate (PNP) or pyridoxamine 5'-phosphate (PMP) into pyridoxal 5'-phosphate (PLP). The sequence is that of Pyridoxine/pyridoxamine 5'-phosphate oxidase from Mycolicibacterium smegmatis (strain ATCC 700084 / mc(2)155) (Mycobacterium smegmatis).